We begin with the raw amino-acid sequence, 522 residues long: Cytochrome P450 26C1 (522 aa).

The helical transmembrane segment at 9-29 threads the bilayer; the sequence is LSVLGAAGTALLCAGLLLSLA. C459 provides a ligand contact to heme.

This sequence belongs to the cytochrome P450 family. It depends on heme as a cofactor. Detected in most tissues at very low level.

It is found in the membrane. The enzyme catalyses an organic molecule + reduced [NADPH--hemoprotein reductase] + O2 = an alcohol + oxidized [NADPH--hemoprotein reductase] + H2O + H(+). The catalysed reaction is all-trans-retinoate + reduced [NADPH--hemoprotein reductase] + O2 = all-trans-4-hydroxyretinoate + oxidized [NADPH--hemoprotein reductase] + H2O + H(+). It carries out the reaction all-trans-4-hydroxyretinoate + reduced [NADPH--hemoprotein reductase] + O2 = all-trans-4-oxoretinoate + oxidized [NADPH--hemoprotein reductase] + 2 H2O + H(+). It catalyses the reaction 9-cis-retinoate + reduced [NADPH--hemoprotein reductase] + O2 = 9-cis-4-hydroxyretinoate + oxidized [NADPH--hemoprotein reductase] + H2O + H(+). The enzyme catalyses 9-cis-4-hydroxyretinoate + reduced [NADPH--hemoprotein reductase] + O2 = 9-cis-4-oxoretinoate + oxidized [NADPH--hemoprotein reductase] + 2 H2O + H(+). The catalysed reaction is all-trans-4-hydroxy-13,14-dihydroretinoate + reduced [NADPH--hemoprotein reductase] + O2 = all-trans-4-oxo-13,14-dihydroretinoate + oxidized [NADPH--hemoprotein reductase] + 2 H2O + H(+). It carries out the reaction all-trans-13,14-dihydroretinoate + reduced [NADPH--hemoprotein reductase] + O2 = all-trans-4-hydroxy-13,14-dihydroretinoate + oxidized [NADPH--hemoprotein reductase] + H2O + H(+). A cytochrome P450 monooxygenase involved in the metabolism of retinoates (RAs), the active metabolites of vitamin A, and critical signaling molecules in animals. RAs exist as at least four different isomers: all-trans-RA (atRA), 9-cis-RA, 13-cis-RA, and 9,13-dicis-RA, where atRA is considered to be the biologically active isomer, although 9-cis-RA and 13-cis-RA also have activity. Catalyzes the oxidation of atRA primarily at C-4. Oxidation of atRA limits its biological activity and initiates a degradative process leading to its eventual elimination, thereby contributes to the regulation of atRA homeostasis and signaling. Able to metabolize other RAs such as 9-cis with high efficiency. Can oxidize all-trans-13,14-dihydroretinoate (DRA) to metabolites which could include all-trans-4-oxo-DRA, all-trans-4-hydroxy-DRA, all-trans-5,8-epoxy-DRA, and all-trans-18-hydroxy-DRA. Shares sequence similarity with other CYP26 family members, but has higher affinity to 9-cis-RA and is much less sensitive to the inhibitory effects of ketoconazole. In cooperation with Cyp26a1, contributes to the CNS patterning and the development of regions of higher visual acuity. The protein is Cytochrome P450 26C1 (CYP26C1) of Homo sapiens (Human).